The chain runs to 282 residues: MTDETTQNIKDKTEEELAALLDQTLGEFTATPAPKPRTTDDELDELMASADQEAAQKAAKDFQKMLEQMVTLQEEAMKKAGADPSEGEGEQPLDPNDPEALAMMDALKQLMECSSNVANASNPEEFMAGLDMLRSPNSPMEPFMSMIMQTLASKEVMYPPLKEIFDNYPKYLEDNGAGLDAETKERYEKQFEVLGKICTEFEKQPELAEVQPVDAATQPAPEADPASIEHFEKLGKLLVELQQYGYPPKELVGALPDGWQIDESGLPKVADAAAATEACSIM.

The segment at 73–95 (QEEAMKKAGADPSEGEGEQPLDP) is disordered. Position 279 is a cysteine methyl ester (Cys279). Residue Cys279 is the site of S-farnesyl cysteine attachment. The propeptide at 280–282 (SIM) is removed in mature form.

Belongs to the peroxin-19 family.

The protein localises to the peroxisome. In Caenorhabditis elegans, this protein is Putative peroxisomal biogenesis factor 19 (prx-19).